Consider the following 119-residue polypeptide: MAGRGKLIAVIGDEDTVTGFLLGGIGELNKNRHPNFLVVEKDTTINEIEDTFRQFLNRDDIGIILINQYIAEMVRHALDAHQRSIPAVLEIPSKEHPYDAAKDSILRRAKGMFTAEDLR.

Belongs to the V-ATPase F subunit family. In terms of assembly, V-ATPase is a heteromultimeric enzyme made up of two complexes: the ATP-hydrolytic V1 complex and the proton translocation V0 complex. The V1 complex consists of three catalytic AB heterodimers that form a heterohexamer, three peripheral stalks each consisting of EG heterodimers, one central rotor including subunits D and F, and the regulatory subunits C and H. The proton translocation complex V0 consists of the proton transport subunit a, a ring of proteolipid subunits c9c'', rotary subunit d, subunits e and f, and the accessory subunits ATP6AP1/Ac45 and ATP6AP2/PRR.

Its subcellular location is the cytoplasmic vesicle. It localises to the secretory vesicle. It is found in the synaptic vesicle membrane. The protein localises to the clathrin-coated vesicle membrane. Functionally, subunit of the V1 complex of vacuolar(H+)-ATPase (V-ATPase), a multisubunit enzyme composed of a peripheral complex (V1) that hydrolyzes ATP and a membrane integral complex (V0) that translocates protons. V-ATPase is responsible for acidifying and maintaining the pH of intracellular compartments and in some cell types, is targeted to the plasma membrane, where it is responsible for acidifying the extracellular environment. The polypeptide is V-type proton ATPase subunit F (Atp6v1f) (Mus musculus (Mouse)).